Here is a 327-residue protein sequence, read N- to C-terminus: MSQARPATVLGAMEMGRRMDVTSSSASVRAFLQRGHTEIDTAFVYANGQSETILGDLGLGLGRSGCKVKIATKAAPMFGKTLKPADVRFQLETSLKRLQCPRVDLFYLHFPDHGTPIEETLQACHQLHQEGKFVELGLSNYVSWEVAEICTLCKKNGWIMPTVYQGMYNAITRQVETELFPCLRHFGLRFYAFNPLAGGLLTGRYKYQDKDGKNPESRFFGNPFSQLYMDRYWKEEHFNGIALVEKALKTTYGPTAPSMISAAVRWMYHHSQLKGTQGDAVILGMSSLEQLEQNLALVEEGPLEPAVVDAFDQAWNLVAHECPNYFR.

Serine 2 is subject to Phosphoserine. Methionine 13, arginine 18, and aspartate 40 together coordinate NADP(+). Tyrosine 45 (proton donor) is an active-site residue. Citrate is bound at residue histidine 109. Residues asparagine 140, asparagine 194, leucine 196, glycine 198, arginine 204, and arginine 218 each coordinate NADP(+). Positions 228 and 231 each coordinate citrate. Positions 286, 290, 293, 294, and 327 each coordinate NADP(+).

Belongs to the aldo/keto reductase family. Aldo/keto reductase 2 subfamily. In terms of assembly, homodimer. Heterodimer with AKR7A2.

It is found in the cytoplasm. It carries out the reaction a primary alcohol + NADP(+) = an aldehyde + NADPH + H(+). The catalysed reaction is aflatoxin B1 dialdehyde + NADPH + H(+) = aflatoxin B1 C(6a)-monoaldehyde + NADP(+). The enzyme catalyses aflatoxin B1 dialdehyde + NADPH + H(+) = aflatoxin B1 C(8)-monoaldehyde + NADP(+). It catalyses the reaction aflatoxin B1 C(6a)-monoaldehyde + NADPH + 2 H(+) = aflatoxin B1 triol + NADP(+). Its activity is regulated as follows. Inhibited by citrate. Catalyzes the NADPH-dependent reduction of various carbonyl-containing compounds, including aldehydes, ketones, and toxic products from cellular metabolism or environmental exposure. Can reduce the dialdehyde form of aflatoxin B1 (AFB1) into alcohol derivatives, via monoaldehydes intermediates, thus preventing the formation of protein adducts that contribute to AFB1-induced toxicity. The chain is Aldo-keto reductase family 7 member A3 from Rattus norvegicus (Rat).